The following is an 88-amino-acid chain: Small ribosomal subunit protein bS20 (88 aa).

It belongs to the bacterial ribosomal protein bS20 family.

Binds directly to 16S ribosomal RNA. This Clostridium botulinum (strain ATCC 19397 / Type A) protein is Small ribosomal subunit protein bS20.